Reading from the N-terminus, the 393-residue chain is Sulfate adenylyltransferase (393 aa).

It belongs to the sulfate adenylyltransferase family.

It carries out the reaction sulfate + ATP + H(+) = adenosine 5'-phosphosulfate + diphosphate. The protein operates within sulfur metabolism; hydrogen sulfide biosynthesis; sulfite from sulfate: step 1/3. The chain is Sulfate adenylyltransferase from Symbiobacterium thermophilum (strain DSM 24528 / JCM 14929 / IAM 14863 / T).